The primary structure comprises 267 residues: MSVNHYHNTLSLHHHHQNDVAIAQRESLFEKSLTPSDVGKLNRLVIPKQHAEKYFPLNNNNNNGGSGDDVATTEKGMLLSFEDESGKCWKFRYSYWNSSQSYVLTKGWSRYVKDKHLDAGDVVFFQRHRFDLHRLFIGWRRRGEASSSPAVSVVSQEALVNTTAYWSGLTTPYRQVHASTTYPNIHQEYSHYGAVVDHAQSIPPVVAGSSRTVRLFGVNLECHGDAVEPPPRPDVYNDQHIYYYSTPHPMNISFAGEALEQVGDGRG.

Residues 29 to 143 constitute a DNA-binding region (TF-B3); that stretch reads FEKSLTPSDV…RLFIGWRRRG (115 aa).

The protein resides in the nucleus. In Arabidopsis thaliana (Mouse-ear cress), this protein is B3 domain-containing protein At3g11580 (ARF32).